Consider the following 475-residue polypeptide: Eukaryotic translation initiation factor 3 subunit L (475 aa).

Positions 257-451 (DAIRMFSHIL…DLDYAMQGDL (195 aa)) constitute a PCI domain.

It belongs to the eIF-3 subunit L family. In terms of assembly, component of the eukaryotic translation initiation factor 3 (eIF-3) complex.

The protein resides in the cytoplasm. In terms of biological role, component of the eukaryotic translation initiation factor 3 (eIF-3) complex, which is involved in protein synthesis of a specialized repertoire of mRNAs and, together with other initiation factors, stimulates binding of mRNA and methionyl-tRNAi to the 40S ribosome. The eIF-3 complex specifically targets and initiates translation of a subset of mRNAs involved in cell proliferation. The polypeptide is Eukaryotic translation initiation factor 3 subunit L (Botryotinia fuckeliana (strain B05.10) (Noble rot fungus)).